We begin with the raw amino-acid sequence, 115 residues long: DNA-binding protein APE_1087b (115 aa).

It belongs to the PDCD5 family.

The sequence is that of DNA-binding protein APE_1087b from Aeropyrum pernix (strain ATCC 700893 / DSM 11879 / JCM 9820 / NBRC 100138 / K1).